The sequence spans 343 residues: Pseudaminic acid synthase (343 aa).

The AFP-like domain maps to 287 to 343 (SLYASKDIKKGEIFSEENVKSVRPSFGLHPKFYQELLGKKASKDIEFGDALKESDFR).

This sequence belongs to the pseudaminic acid synthase family. A divalent metal cation serves as cofactor.

The enzyme catalyses 2,4-diacetamido-2,4,6-trideoxy-beta-L-altrose + phosphoenolpyruvate + H2O = pseudaminate + phosphate. Catalyzes the fifth step in the biosynthesis of pseudaminic acid, a sialic-acid-like sugar that is used to modify flagellin. Catalyzes the condensation of phosphoenolpyruvate with 2,4-diacetamido-2,4,6-trideoxy-beta-l-altropyranose, forming pseudaminic acid. The sequence is that of Pseudaminic acid synthase (pseI) from Campylobacter jejuni subsp. jejuni serotype O:23/36 (strain 81-176).